A 146-amino-acid polypeptide reads, in one-letter code: MORN repeat-containing protein 4 (146 aa).

MORN repeat units follow at residues tyrosine 16–threonine 38, tyrosine 39–arginine 61, tyrosine 62–threonine 84, and phenylalanine 85–histidine 107.

As to quaternary structure, interacts with MYO3A.

The protein resides in the cytoplasm. Its subcellular location is the cell projection. It localises to the filopodium tip. It is found in the stereocilium. Its function is as follows. Plays a role in promoting axonal degeneration following neuronal injury by toxic insult or trauma. This is MORN repeat-containing protein 4 (MORN4) from Homo sapiens (Human).